We begin with the raw amino-acid sequence, 191 residues long: MGQIEWAMWANEQALASGLILITGGIVATAGQFTQWYLGAYSIAAGVLVCLLEYPRGKRSKGSTMERCGQKYLTRVVKLFGPLTRNYYIRAFLHLGLAVPAGFLLATILGTACLAIASGIYLLAAIRGEQWSPIEPKPKERPQIGGTIKQPPSNPPPRPPAEARKKPSEEAAGVPTGGPQENPMPVNDEVV.

Topologically, residues 2–7 are cytoplasmic; that stretch reads GQIEWA. Residues 8 to 30 traverse the membrane as a helical segment; sequence MWANEQALASGLILITGGIVATA. The Extracellular segment spans residues 31-35; the sequence is GQFTQ. A helical membrane pass occupies residues 36 to 53; sequence WYLGAYSIAAGVLVCLLE. Over 54-69 the chain is Cytoplasmic; that stretch reads YPRGKRSKGSTMERCG. An intramembrane segment occupies 70–80; that stretch reads QKYLTRVVKLF. Over 81 to 86 the chain is Cytoplasmic; that stretch reads GPLTRN. Residues 87–104 traverse the membrane as a helical segment; it reads YYIRAFLHLGLAVPAGFL. Residue Leu105 is a topological domain, extracellular. Residues 106 to 126 form a helical membrane-spanning segment; sequence ATILGTACLAIASGIYLLAAI. Topologically, residues 127 to 191 are cytoplasmic; that stretch reads RGEQWSPIEP…NPMPVNDEVV (65 aa). The segment at 134-191 is disordered; it reads IEPKPKERPQIGGTIKQPPSNPPPRPPAEARKKPSEEAAGVPTGGPQENPMPVNDEVV. Phosphothreonine is present on Thr147. A Glycyl lysine isopeptide (Lys-Gly) (interchain with G-Cter in ubiquitin) cross-link involves residue Lys149. A Phosphoserine modification is found at Ser168.

The protein belongs to the p22phox family. As to quaternary structure, component of the phagocyte NADPH oxidase core complex/cytochrome b558 complex, composed of CYBB (heavy chain (beta)) and CYBA (light chain (alpha)). Component of the phagocyte NADPH oxidase complex composed of an obligatory core heterodimer formed by the membrane proteins CYBA and CYBB and the cytosolic regulatory subunits NCF1/p47-phox, NCF2/p67-phox, NCF4/p40-phox and the small GTPase RAC1 or RAC2. Interacts with NCF1 (via SH3 domain). Interacts with SH3PXD2A. Interacts with DUOX1, DUOX2 and TPO. Interacts with NOX4; this interaction mediates superoxide generation. Interacts with calprotectin (S100A8/9). Interacts with GBP7. Interacts with NOXO1. Forms a heterodimer with NOX3 and is essential for activity and cell membrane localization of NOX3. Interacts with NOX1. Phosphorylation at Thr-147 enhances NADPH oxidase activity by promoting NCF1/p47-phox binding. In terms of processing, ubiquitinated at Lys-149 likely by RNF145.

Its subcellular location is the cell membrane. Functionally, subunit of NADPH oxidase complexes that is required for the NADPH oxidase activity that generates, in various cell types, superoxide from molecular oxygen utilizing NADPH as an electron donor. Subunit of the phagocyte NADPH oxidase complex that mediates the transfer of electrons from cytosolic NADPH to O2 to produce the superoxide anion (O2(-)). In the activated complex, electrons are first transferred from NADPH to flavin adenine dinucleotide (FAD) and subsequently transferred via two heme molecules to molecular oxygen, producing superoxide through an outer-sphere reaction. Activation of the NADPH oxidase complex is initiated by the assembly of cytosolic subunits of the NADPH oxidase complex with the core NADPH oxidase complex to form a complex at the plasma membrane or phagosomal membrane. This activation process is initiated by phosphorylation dependent binding of the cytosolic NCF1/p47-phox subunit to the C-terminus of CYBA/p22-phox. Aassociates with NOX3 to form a functional NADPH oxidase constitutively generating superoxide. This Bos taurus (Bovine) protein is Cytochrome b-245 light chain.